We begin with the raw amino-acid sequence, 394 residues long: Olfactomedin-like protein 3B (394 aa).

Residues 1-18 (MKATIFFLLLTVLAHSRS) form the signal peptide. Positions 29–94 (LENRMLAMEE…RVDRVEREMD (66 aa)) form a coiled coil. One can recognise an Olfactomedin-like domain in the interval 132-383 (VCVNIISSLK…QILYKLELKK (252 aa)). An intrachain disulfide couples Cys-133 to Cys-310. N-linked (GlcNAc...) asparagine glycosylation is found at Asn-169, Asn-204, and Asn-233.

The protein belongs to the OLFML3 family.

Its subcellular location is the secreted. Secreted scaffold protein that plays an essential role in dorsoventral patterning during early development. Stabilizes axial formation by restricting chordin (CHRD) activity on the dorsal side. Acts by facilitating the association between the tolloid proteases and their substrate chordin (CHRD), leading to enhance chordin (CHRD) degradation. This chain is Olfactomedin-like protein 3B (olfml3b), found in Danio rerio (Zebrafish).